A 158-amino-acid chain; its full sequence is uncharacterized protein (158 aa).

This is an uncharacterized protein from Mycobacterium tuberculosis (strain CDC 1551 / Oshkosh).